A 565-amino-acid chain; its full sequence is Proline--tRNA ligase (565 aa).

It belongs to the class-II aminoacyl-tRNA synthetase family. ProS type 1 subfamily. In terms of assembly, homodimer.

It is found in the cytoplasm. It catalyses the reaction tRNA(Pro) + L-proline + ATP = L-prolyl-tRNA(Pro) + AMP + diphosphate. In terms of biological role, catalyzes the attachment of proline to tRNA(Pro) in a two-step reaction: proline is first activated by ATP to form Pro-AMP and then transferred to the acceptor end of tRNA(Pro). As ProRS can inadvertently accommodate and process non-cognate amino acids such as alanine and cysteine, to avoid such errors it has two additional distinct editing activities against alanine. One activity is designated as 'pretransfer' editing and involves the tRNA(Pro)-independent hydrolysis of activated Ala-AMP. The other activity is designated 'posttransfer' editing and involves deacylation of mischarged Ala-tRNA(Pro). The misacylated Cys-tRNA(Pro) is not edited by ProRS. The chain is Proline--tRNA ligase from Francisella tularensis subsp. holarctica (strain FTNF002-00 / FTA).